The sequence spans 265 residues: 6-carboxyhexanoate--CoA ligase (265 aa).

This sequence belongs to the BioW family. Homodimer. It depends on Mg(2+) as a cofactor.

The catalysed reaction is heptanedioate + ATP + CoA = 6-carboxyhexanoyl-CoA + AMP + diphosphate. It functions in the pathway metabolic intermediate metabolism; pimeloyl-CoA biosynthesis; pimeloyl-CoA from pimelate: step 1/1. Its function is as follows. Catalyzes the transformation of pimelate into pimeloyl-CoA with concomitant hydrolysis of ATP to AMP. In Syntrophotalea carbinolica (strain DSM 2380 / NBRC 103641 / GraBd1) (Pelobacter carbinolicus), this protein is 6-carboxyhexanoate--CoA ligase.